Reading from the N-terminus, the 100-residue chain is MFAIIETGGKQILVKEGDSIYVEKLEGQEKSEVKFDKVLAVNDVFGKPYVTGAVVHGTIEKQGKAKKIVVYRHNPKSTHKRKLGHRQPYTLVKITKIKGK.

This sequence belongs to the bacterial ribosomal protein bL21 family. As to quaternary structure, part of the 50S ribosomal subunit. Contacts protein L20.

Functionally, this protein binds to 23S rRNA in the presence of protein L20. The protein is Large ribosomal subunit protein bL21 of Mycoplasmopsis synoviae (strain 53) (Mycoplasma synoviae).